The chain runs to 308 residues: Ribosomal RNA large subunit methyltransferase F (308 aa).

This sequence belongs to the methyltransferase superfamily. METTL16/RlmF family.

It localises to the cytoplasm. It carries out the reaction adenosine(1618) in 23S rRNA + S-adenosyl-L-methionine = N(6)-methyladenosine(1618) in 23S rRNA + S-adenosyl-L-homocysteine + H(+). In terms of biological role, specifically methylates the adenine in position 1618 of 23S rRNA. This chain is Ribosomal RNA large subunit methyltransferase F, found in Shigella flexneri serotype 5b (strain 8401).